The following is a 144-amino-acid chain: Large ribosomal subunit protein uL15 (144 aa).

Residues 1–49 form a disordered region; that stretch reads MRLNTLSPAAGAKSAAKRVGRGIGSGTGKTCGRGHKGQKSRSGGGVRVG. A compositionally biased stretch (gly residues) spans 21-31; sequence RGIGSGTGKTC.

It belongs to the universal ribosomal protein uL15 family. As to quaternary structure, part of the 50S ribosomal subunit.

Its function is as follows. Binds to the 23S rRNA. The sequence is that of Large ribosomal subunit protein uL15 from Shewanella halifaxensis (strain HAW-EB4).